The sequence spans 63 residues: Putative transmembrane protein ORF63 (63 aa).

Residues 1–8 lie on the Extracellular side of the membrane; the sequence is MQSGNFTL. A helical transmembrane segment spans residues 9-29; it reads EVIMYLINSILAFIMIFFTFV. Residues 30 to 31 lie on the Cytoplasmic side of the membrane; that stretch reads NP. A helical membrane pass occupies residues 32–52; the sequence is SLLKCQYWTYILVALITAIIF. At 53–63 the chain is on the extracellular side; that stretch reads HTGSKVGKSSG.

It localises to the host membrane. In Acidianus filamentous virus 1 (isolate United States/Yellowstone) (AFV-1), this protein is Putative transmembrane protein ORF63.